The primary structure comprises 76 residues: Sec-independent protein translocase protein TatA (76 aa).

The chain crosses the membrane as a helical span at residues 1 to 21 (MGSFSIWHWLIVLVIVALVFG). 2 stretches are compositionally biased toward basic and acidic residues: residues 39 to 50 (FKDGMKGEDDKP) and 64 to 76 (GTVDVEVKEKSNS). The disordered stretch occupies residues 39-76 (FKDGMKGEDDKPAAQNAAPSQVADKGTVDVEVKEKSNS).

The protein belongs to the TatA/E family. As to quaternary structure, the Tat system comprises two distinct complexes: a TatABC complex, containing multiple copies of TatA, TatB and TatC subunits, and a separate TatA complex, containing only TatA subunits. Substrates initially bind to the TatABC complex, which probably triggers association of the separate TatA complex to form the active translocon.

Its subcellular location is the cell inner membrane. Its function is as follows. Part of the twin-arginine translocation (Tat) system that transports large folded proteins containing a characteristic twin-arginine motif in their signal peptide across membranes. TatA could form the protein-conducting channel of the Tat system. The protein is Sec-independent protein translocase protein TatA of Herminiimonas arsenicoxydans.